Consider the following 55-residue polypeptide: Large ribosomal subunit protein bL33 (55 aa).

It belongs to the bacterial ribosomal protein bL33 family.

This is Large ribosomal subunit protein bL33 from Methylobacterium nodulans (strain LMG 21967 / CNCM I-2342 / ORS 2060).